Consider the following 445-residue polypeptide: N-succinylarginine dihydrolase (445 aa).

Residues 19–28 (AGLSFGNVAS), Asn110, and 137–138 (HR) each bind substrate. The active site involves Glu174. A substrate-binding site is contributed by Arg214. The active site involves His250. Asp252 and Asn363 together coordinate substrate. Cys369 functions as the Nucleophile in the catalytic mechanism.

It belongs to the succinylarginine dihydrolase family. Homodimer.

It catalyses the reaction N(2)-succinyl-L-arginine + 2 H2O + 2 H(+) = N(2)-succinyl-L-ornithine + 2 NH4(+) + CO2. It functions in the pathway amino-acid degradation; L-arginine degradation via AST pathway; L-glutamate and succinate from L-arginine: step 2/5. Catalyzes the hydrolysis of N(2)-succinylarginine into N(2)-succinylornithine, ammonia and CO(2). The chain is N-succinylarginine dihydrolase from Shewanella sediminis (strain HAW-EB3).